Consider the following 379-residue polypeptide: Putative F-box protein At2g33190 (379 aa).

In terms of domain architecture, F-box spans 6 to 53 (NGWSKLYPDLLRSIFESLSCLDFHRAGTVCSNWYAVSRSCPLYPWRIV).

The polypeptide is Putative F-box protein At2g33190 (Arabidopsis thaliana (Mouse-ear cress)).